A 220-amino-acid chain; its full sequence is MVDPLILGAVGAGLAVGIAGLGSGIGAGITGASGAGVVAEDPNKFGTAIVFQALPQTQGLYGFLVAILILFVFKTVSPWAMFAAGLAAGLAGLSAIGQGIAASAGLGAVAEDNSIFGKAMVFSVLPETQAIYGLLIAILLLVGVFKGNAGAETVAALGAGFAVGFAGLSGIGQGITAAGAIGATARDPDAMGKGLVLAVMPETFAIFGLLIAILIMLMIK.

Transmembrane regions (helical) follow at residues 5-25, 63-83, 90-110, 125-145, 155-175, and 195-215; these read LILG…GSGI, FLVA…AMFA, LAGL…GAVA, LPET…VGVF, AALG…GQGI, and LVLA…AILI.

It belongs to the V-ATPase proteolipid subunit family. As to quaternary structure, the A-type ATPase is composed of subunits A(3), B(3), C, D, E(1 or 2), F, H(2), I and K(x). Subunit K dimerizes and may form higher oligomers.

The protein resides in the cell membrane. Component of the A-type ATP synthase that produces ATP from ADP in the presence of a proton gradient across the membrane. The sequence is that of A-type ATP synthase subunit K from Methanocaldococcus jannaschii (strain ATCC 43067 / DSM 2661 / JAL-1 / JCM 10045 / NBRC 100440) (Methanococcus jannaschii).